A 380-amino-acid polypeptide reads, in one-letter code: Chaperone protein DnaJ (380 aa).

The J domain maps to 5–70 (DYYEVLGLQK…EKRAAYDQYG (66 aa)). The CR-type zinc-finger motif lies at 136-214 (GCKKDIRIST…CHGDGRVQKA (79 aa)). Residues Cys-149, Cys-152, Cys-166, Cys-169, Cys-188, Cys-191, Cys-202, and Cys-205 each contribute to the Zn(2+) site. CXXCXGXG motif repeat units lie at residues 149-156 (CDTCHGSG), 166-173 (CSHCHGSG), 188-195 (CPSCHGSG), and 202-209 (CKSCHGDG).

Belongs to the DnaJ family. Homodimer. Zn(2+) is required as a cofactor.

The protein resides in the cytoplasm. Its function is as follows. Participates actively in the response to hyperosmotic and heat shock by preventing the aggregation of stress-denatured proteins and by disaggregating proteins, also in an autonomous, DnaK-independent fashion. Unfolded proteins bind initially to DnaJ; upon interaction with the DnaJ-bound protein, DnaK hydrolyzes its bound ATP, resulting in the formation of a stable complex. GrpE releases ADP from DnaK; ATP binding to DnaK triggers the release of the substrate protein, thus completing the reaction cycle. Several rounds of ATP-dependent interactions between DnaJ, DnaK and GrpE are required for fully efficient folding. Also involved, together with DnaK and GrpE, in the DNA replication of plasmids through activation of initiation proteins. This Actinobacillus pleuropneumoniae serotype 5b (strain L20) protein is Chaperone protein DnaJ.